Here is a 168-residue protein sequence, read N- to C-terminus: Small ribosomal subunit protein uS5 (168 aa).

An S5 DRBM domain is found at 13–76 (LKEQVVDIKR…EDAKKNLIHV (64 aa)).

It belongs to the universal ribosomal protein uS5 family. As to quaternary structure, part of the 30S ribosomal subunit. Contacts proteins S4 and S8.

With S4 and S12 plays an important role in translational accuracy. Its function is as follows. Located at the back of the 30S subunit body where it stabilizes the conformation of the head with respect to the body. The polypeptide is Small ribosomal subunit protein uS5 (Alkaliphilus oremlandii (strain OhILAs) (Clostridium oremlandii (strain OhILAs))).